A 287-amino-acid polypeptide reads, in one-letter code: MEGVIVPLITPFKEDHSIDFEALEWLIKFLEEKGVHGIFINSTTGEFTSLSLEERKILAEKGREVTSRTYLVGTGSTSTFEVIELTKHAKEIGADGVVIVSPYYCRLKEDAIFKHFSMVAEKVDIPIILYAIPSCANPISLEVVRKLALEYSNVIGVKASVDSLTYLSGLIEIKEERKDFKVFTGLDQYFLPNLILGGDGGIMACANFVPEIHLEVWNAFKKGNLEKAMNSARKLVKITKIYSIASSFASAVKLAMVARGFPIKPILRPPYMMDGEEVFKKIKEIVS.

Active-site charge relay system residues include T43 and Y104. The active-site Proton donor is the Y130. The Schiff-base intermediate with substrate role is filled by K158.

The protein belongs to the DapA family. As to quaternary structure, homotetramer.

The protein localises to the cytoplasm. This is an uncharacterized protein from Pyrococcus horikoshii (strain ATCC 700860 / DSM 12428 / JCM 9974 / NBRC 100139 / OT-3).